The sequence spans 249 residues: MAGHSQFSNIKYRKGAQDAKRSQRFTKLIREITVAAKQGLPDPEFNPRLRSAVFAARKENLPKDRIETAIKNAAGNVAGENYEEIQYEGHGPFGTALIVHVLTNNRNRAASEVRYIFSRKNGSLGETGSVSYLFDHVGLIVYKAESVNFDDLFSHGIELEVLNVEENNIEGLYVITCRVKDFGKVRNAFYAKFGEPELARLSWQPKDLIEISDKKLIDKLSALVEELEDNDDVQYVEGNFAFAGLSLKL.

The protein belongs to the TACO1 family.

The protein resides in the cytoplasm. This Wolbachia sp. subsp. Brugia malayi (strain TRS) protein is Probable transcriptional regulatory protein Wbm0670.